A 142-amino-acid polypeptide reads, in one-letter code: Small ribosomal subunit protein uS12 (142 aa).

It belongs to the universal ribosomal protein uS12 family. Part of the 30S ribosomal subunit.

Its function is as follows. With S4 and S5 plays an important role in translational accuracy. Located at the interface of the 30S and 50S subunits. This chain is Small ribosomal subunit protein uS12, found in Methanoculleus marisnigri (strain ATCC 35101 / DSM 1498 / JR1).